Consider the following 292-residue polypeptide: Zinc finger protein SNAI3 (292 aa).

Residues 1-20 are SNAG domain; it reads MPRSFLVKTHSSHRVPNYRR. 4 C2H2-type zinc fingers span residues 152 to 174, 183 to 205, 209 to 231, and 237 to 259; these read FECFHCHKPYHTLAGLARHRQLH, FTCKYCDKEYTSLGALKMHIRTH, CTCKICGKAFSRPWLLQGHVRTH, and YACSHCSRAFADRSNLRAHLQTH. The C2H2-type 5; degenerate zinc finger occupies 265-287; the sequence is YRCRRCTKTFSRMSLLARHEESG.

The protein belongs to the snail C2H2-type zinc-finger protein family.

It is found in the nucleus. Seems to inhibit myoblast differentiation. Transcriptional repressor of E-box-dependent transactivation of downstream myogenic bHLHs genes. Binds preferentially to the canonical E-box sequences 5'-CAGGTG-3' and 5'-CACCTG-3'. In Homo sapiens (Human), this protein is Zinc finger protein SNAI3 (SNAI3).